Here is a 264-residue protein sequence, read N- to C-terminus: Acyl-[acyl-carrier-protein]--UDP-N-acetylglucosamine O-acyltransferase (264 aa).

The protein belongs to the transferase hexapeptide repeat family. LpxA subfamily. As to quaternary structure, homotrimer.

Its subcellular location is the cytoplasm. The enzyme catalyses a (3R)-hydroxyacyl-[ACP] + UDP-N-acetyl-alpha-D-glucosamine = a UDP-3-O-[(3R)-3-hydroxyacyl]-N-acetyl-alpha-D-glucosamine + holo-[ACP]. It functions in the pathway glycolipid biosynthesis; lipid IV(A) biosynthesis; lipid IV(A) from (3R)-3-hydroxytetradecanoyl-[acyl-carrier-protein] and UDP-N-acetyl-alpha-D-glucosamine: step 1/6. Its function is as follows. Involved in the biosynthesis of lipid A, a phosphorylated glycolipid that anchors the lipopolysaccharide to the outer membrane of the cell. This Albidiferax ferrireducens (strain ATCC BAA-621 / DSM 15236 / T118) (Rhodoferax ferrireducens) protein is Acyl-[acyl-carrier-protein]--UDP-N-acetylglucosamine O-acyltransferase.